The chain runs to 677 residues: UvrABC system protein B (677 aa).

In terms of domain architecture, Helicase ATP-binding spans Ala-27–Gly-192. Gly-40–Thr-47 lines the ATP pocket. Residues Tyr-93–Ile-116 carry the Beta-hairpin motif. In terms of domain architecture, Helicase C-terminal spans Gln-432–Leu-594. The UVR domain occupies Ala-638–Arg-673.

This sequence belongs to the UvrB family. In terms of assembly, forms a heterotetramer with UvrA during the search for lesions. Interacts with UvrC in an incision complex.

It localises to the cytoplasm. In terms of biological role, the UvrABC repair system catalyzes the recognition and processing of DNA lesions. A damage recognition complex composed of 2 UvrA and 2 UvrB subunits scans DNA for abnormalities. Upon binding of the UvrA(2)B(2) complex to a putative damaged site, the DNA wraps around one UvrB monomer. DNA wrap is dependent on ATP binding by UvrB and probably causes local melting of the DNA helix, facilitating insertion of UvrB beta-hairpin between the DNA strands. Then UvrB probes one DNA strand for the presence of a lesion. If a lesion is found the UvrA subunits dissociate and the UvrB-DNA preincision complex is formed. This complex is subsequently bound by UvrC and the second UvrB is released. If no lesion is found, the DNA wraps around the other UvrB subunit that will check the other stand for damage. The protein is UvrABC system protein B of Nitratidesulfovibrio vulgaris (strain DP4) (Desulfovibrio vulgaris).